Here is a 474-residue protein sequence, read N- to C-terminus: 6-phospho-beta-galactosidase (474 aa).

Residues Q19, H116, N159, E160, and N297 each coordinate D-galactose 6-phosphate. E160 (proton donor) is an active-site residue. E375 serves as the catalytic Nucleophile. The D-galactose 6-phosphate site is built by S433, W434, K440, and Y442.

This sequence belongs to the glycosyl hydrolase 1 family.

It catalyses the reaction a 6-phospho-beta-D-galactoside + H2O = D-galactose 6-phosphate + an alcohol. It functions in the pathway carbohydrate metabolism; lactose degradation; D-galactose 6-phosphate and beta-D-glucose from lactose 6-phosphate: step 1/1. The protein is 6-phospho-beta-galactosidase of Lacticaseibacillus casei (Lactobacillus casei).